The primary structure comprises 733 residues: Phosphoribosylformylglycinamidine synthase subunit PurL (733 aa).

Residue His41 is part of the active site. 2 residues coordinate ATP: Tyr44 and Lys83. Glu85 contacts Mg(2+). Substrate contacts are provided by residues 86-89 (SHNH) and Arg108. His87 (proton acceptor) is an active-site residue. Asp109 contacts Mg(2+). Positions 212-232 (GASFASQELSEESEEKRPSVQ) are disordered. Residue Gln232 participates in substrate binding. Asp260 contacts Mg(2+). A substrate-binding site is contributed by 304–306 (ESQ). 2 residues coordinate ATP: Asp488 and Gly525. Asn526 provides a ligand contact to Mg(2+). Ser528 provides a ligand contact to substrate.

The protein belongs to the FGAMS family. As to quaternary structure, monomer. Part of the FGAM synthase complex composed of 1 PurL, 1 PurQ and 2 PurS subunits.

Its subcellular location is the cytoplasm. The catalysed reaction is N(2)-formyl-N(1)-(5-phospho-beta-D-ribosyl)glycinamide + L-glutamine + ATP + H2O = 2-formamido-N(1)-(5-O-phospho-beta-D-ribosyl)acetamidine + L-glutamate + ADP + phosphate + H(+). It participates in purine metabolism; IMP biosynthesis via de novo pathway; 5-amino-1-(5-phospho-D-ribosyl)imidazole from N(2)-formyl-N(1)-(5-phospho-D-ribosyl)glycinamide: step 1/2. In terms of biological role, part of the phosphoribosylformylglycinamidine synthase complex involved in the purines biosynthetic pathway. Catalyzes the ATP-dependent conversion of formylglycinamide ribonucleotide (FGAR) and glutamine to yield formylglycinamidine ribonucleotide (FGAM) and glutamate. The FGAM synthase complex is composed of three subunits. PurQ produces an ammonia molecule by converting glutamine to glutamate. PurL transfers the ammonia molecule to FGAR to form FGAM in an ATP-dependent manner. PurS interacts with PurQ and PurL and is thought to assist in the transfer of the ammonia molecule from PurQ to PurL. This is Phosphoribosylformylglycinamidine synthase subunit PurL from Thermoanaerobacter sp. (strain X514).